The following is a 225-amino-acid chain: Cytidylate kinase (225 aa).

Glycine 12–threonine 20 provides a ligand contact to ATP.

Belongs to the cytidylate kinase family. Type 1 subfamily.

The protein localises to the cytoplasm. It catalyses the reaction CMP + ATP = CDP + ADP. The catalysed reaction is dCMP + ATP = dCDP + ADP. The sequence is that of Cytidylate kinase from Proteus mirabilis (strain HI4320).